Here is a 63-residue protein sequence, read N- to C-terminus: Large ribosomal subunit protein uL30 (63 aa).

This sequence belongs to the universal ribosomal protein uL30 family. In terms of assembly, part of the 50S ribosomal subunit.

In Hahella chejuensis (strain KCTC 2396), this protein is Large ribosomal subunit protein uL30.